We begin with the raw amino-acid sequence, 419 residues long: eIF5-mimic protein 2 (419 aa).

Met-1 bears the N-acetylmethionine mark. The segment covering 1–15 has biased composition (polar residues); that stretch reads MNNQKQQKPTLSGQR. A disordered region spans residues 1-26; the sequence is MNNQKQQKPTLSGQRFKTRKRDEKER. Residue Ser-12 is modified to Phosphoserine. The 168-residue stretch at 247–414 folds into the W2 domain; sequence NQQTIGARKE…KNAEEESESE (168 aa). Lys-368 participates in a covalent cross-link: Glycyl lysine isopeptide (Lys-Gly) (interchain with G-Cter in SUMO2). Ser-411 and Ser-413 each carry phosphoserine.

This sequence belongs to the BZW family.

In terms of biological role, translation initiation regulator which represses repeat-associated non-AUG (RAN) initiated translation probably by acting as a competitive inhibitor of eukaryotic translation initiation factor 5 (EIF5) function. Enhances histone H4 gene transcription but does not seem to bind DNA directly. The sequence is that of eIF5-mimic protein 2 (BZW1) from Homo sapiens (Human).